Consider the following 1531-residue polypeptide: Lysophospholipase nte1 (1531 aa).

The Cytoplasmic portion of the chain corresponds to 1 to 72 (MATGDGIIAA…TPPAPSTMVG (72 aa)). A helical transmembrane segment spans residues 73-93 (WIGWIFSFIFQVIPSVLYWIV). The Lumenal segment spans residues 94-115 (TFTTITLPTWLFTLFSMSLTFT). The chain crosses the membrane as a helical span at residues 116–136 (MNFTTLLLIALAVVSTISWFI). Over 137–1531 (RYRFLNMYSR…RTLAPRRASI (1395 aa)) the chain is Cytoplasmic. 3 disordered regions span residues 242–265 (GSDEELNRMAGESSDEDDHRPDGR), 303–385 (ASSA…TRRK), and 766–789 (NTSSSRVSGSAAAANDPRRKKQSR). The segment covering 325 to 343 (REMDDSPHVYQGDRLDPAS) has biased composition (basic and acidic residues). Residues 689 to 809 (GGTS…AVAS) and 849 to 969 (RLTS…IAQR) contribute to the a nucleoside 3',5'-cyclic phosphate site. A compositionally biased stretch (low complexity) spans 768-779 (SSSRVSGSAAAA). Residues 1228–1392 (LVLGGGGARG…IDNLTVDHMK (165 aa)) enclose the PNPLA domain. A GXGXXG motif is present at residues 1232–1237 (GGGARG). Positions 1259–1263 (GTSIG) match the GXSXG motif. The Nucleophile role is filled by S1261. Residue D1379 is the Proton acceptor of the active site. Positions 1379 to 1381 (DGG) match the DGA/G motif. The disordered stretch occupies residues 1510 to 1531 (LPEETEEKKKLQRTLAPRRASI).

The protein belongs to the NTE family.

The protein resides in the endoplasmic reticulum membrane. It catalyses the reaction a 1-acyl-sn-glycero-3-phosphocholine + H2O = sn-glycerol 3-phosphocholine + a fatty acid + H(+). Its activity is regulated as follows. Inhibited by organophosphorus esters. Functionally, intracellular phospholipase B that catalyzes the double deacylation of phosphatidylcholine (PC) to glycerophosphocholine (GroPCho). Plays an important role in membrane lipid homeostasis. Responsible for the rapid PC turnover in response to inositol, elevated temperatures, or when choline is present in the growth medium. In Aspergillus niger (strain ATCC MYA-4892 / CBS 513.88 / FGSC A1513), this protein is Lysophospholipase nte1 (nte1).